Here is a 58-residue protein sequence, read N- to C-terminus: Ribosome modulation factor (58 aa).

The protein belongs to the ribosome modulation factor family.

It localises to the cytoplasm. In terms of biological role, during stationary phase, converts 70S ribosomes to an inactive dimeric form (100S ribosomes). The chain is Ribosome modulation factor from Shewanella amazonensis (strain ATCC BAA-1098 / SB2B).